The chain runs to 194 residues: Xanthine phosphoribosyltransferase (194 aa).

The xanthine site is built by Leu-20 and Asn-27. Ala-128–Ala-132 contributes to the 5-phospho-alpha-D-ribose 1-diphosphate binding site. Residue Lys-156 coordinates xanthine.

The protein belongs to the purine/pyrimidine phosphoribosyltransferase family. Xpt subfamily. Homodimer.

It is found in the cytoplasm. The enzyme catalyses XMP + diphosphate = xanthine + 5-phospho-alpha-D-ribose 1-diphosphate. The protein operates within purine metabolism; XMP biosynthesis via salvage pathway; XMP from xanthine: step 1/1. Its function is as follows. Converts the preformed base xanthine, a product of nucleic acid breakdown, to xanthosine 5'-monophosphate (XMP), so it can be reused for RNA or DNA synthesis. The polypeptide is Xanthine phosphoribosyltransferase (Geobacillus thermodenitrificans (strain NG80-2)).